The sequence spans 133 residues: Cytidine deaminase (133 aa).

The 129-residue stretch at 3–131 folds into the CMP/dCMP-type deaminase domain; the sequence is VDLDWVHHKL…EILKGGFRSY (129 aa). Position 43–45 (43–45) interacts with substrate; the sequence is NIE. Cys-54 contributes to the Zn(2+) binding site. Residue Glu-56 is the Proton donor of the active site. The Zn(2+) site is built by Cys-89 and Cys-92.

The protein belongs to the cytidine and deoxycytidylate deaminase family. In terms of assembly, homodimer. It depends on Zn(2+) as a cofactor.

The enzyme catalyses cytidine + H2O + H(+) = uridine + NH4(+). It catalyses the reaction 2'-deoxycytidine + H2O + H(+) = 2'-deoxyuridine + NH4(+). This enzyme scavenges exogenous and endogenous cytidine and 2'-deoxycytidine for UMP synthesis. The protein is Cytidine deaminase (cdd) of Mycoplasma pneumoniae (strain ATCC 29342 / M129 / Subtype 1) (Mycoplasmoides pneumoniae).